Reading from the N-terminus, the 599-residue chain is DNA primase (599 aa).

The CHC2-type zinc-finger motif lies at 40–64 (CPFHGENTPSFSVSPDKQLYHCFGC). Residues 259–342 (NEAVLFEGYV…KVAMIPDGLD (84 aa)) form the Toprim domain. Glu-265, Asp-309, and Asp-311 together coordinate Mg(2+).

Belongs to the DnaG primase family. As to quaternary structure, monomer. Interacts with DnaB. It depends on Zn(2+) as a cofactor. Mg(2+) serves as cofactor.

It catalyses the reaction ssDNA + n NTP = ssDNA/pppN(pN)n-1 hybrid + (n-1) diphosphate.. Functionally, RNA polymerase that catalyzes the synthesis of short RNA molecules used as primers for DNA polymerase during DNA replication. This chain is DNA primase, found in Halalkalibacterium halodurans (strain ATCC BAA-125 / DSM 18197 / FERM 7344 / JCM 9153 / C-125) (Bacillus halodurans).